The chain runs to 249 residues: Proteasome subunit alpha (249 aa).

The protein belongs to the peptidase T1A family. As to quaternary structure, the 20S proteasome core is composed of 14 alpha and 14 beta subunits that assemble into four stacked heptameric rings, resulting in a barrel-shaped structure. The two inner rings, each composed of seven catalytic beta subunits, are sandwiched by two outer rings, each composed of seven alpha subunits. The catalytic chamber with the active sites is on the inside of the barrel. Has a gated structure, the ends of the cylinder being occluded by the N-termini of the alpha-subunits. Is capped at one or both ends by the proteasome regulatory ATPase, PAN.

The protein localises to the cytoplasm. With respect to regulation, the formation of the proteasomal ATPase PAN-20S proteasome complex, via the docking of the C-termini of PAN into the intersubunit pockets in the alpha-rings, triggers opening of the gate for substrate entry. Interconversion between the open-gate and close-gate conformations leads to a dynamic regulation of the 20S proteasome proteolysis activity. In terms of biological role, component of the proteasome core, a large protease complex with broad specificity involved in protein degradation. This Methanosarcina mazei (strain ATCC BAA-159 / DSM 3647 / Goe1 / Go1 / JCM 11833 / OCM 88) (Methanosarcina frisia) protein is Proteasome subunit alpha.